Here is a 243-residue protein sequence, read N- to C-terminus: Phosphoribosylaminoimidazole-succinocarboxamide synthase (243 aa).

The protein belongs to the SAICAR synthetase family.

The catalysed reaction is 5-amino-1-(5-phospho-D-ribosyl)imidazole-4-carboxylate + L-aspartate + ATP = (2S)-2-[5-amino-1-(5-phospho-beta-D-ribosyl)imidazole-4-carboxamido]succinate + ADP + phosphate + 2 H(+). It participates in purine metabolism; IMP biosynthesis via de novo pathway; 5-amino-1-(5-phospho-D-ribosyl)imidazole-4-carboxamide from 5-amino-1-(5-phospho-D-ribosyl)imidazole-4-carboxylate: step 1/2. This Thermosynechococcus vestitus (strain NIES-2133 / IAM M-273 / BP-1) protein is Phosphoribosylaminoimidazole-succinocarboxamide synthase.